The primary structure comprises 171 residues: uncharacterized protein (171 aa).

Its function is as follows. Required for production of the bacteriocin SkfA. This is an uncharacterized protein from Bacillus subtilis (strain 168).